Reading from the N-terminus, the 444-residue chain is C4-dicarboxylate transport protein 3 (444 aa).

The next 9 membrane-spanning stretches (helical) occupy residues 22-42, 60-80, 95-115, 162-182, 198-218, 236-256, 321-341, 346-366, and 399-419; these read VLYVQVLIAIVLGAIVGWLWP, LIKMVIAPIIFCTVVSGIAHI, VYFEVVSTFALVIGLIIGNLV, GEILQVLLFSVLFGFAIMSLG, AVFGVISIVMRAAPIGAFGAM, LIATFYVTAALFVFVVLGIIA, IYMTLATLFIAQALGFDLSFG, ILVVAMLTSKGASGITGAGFI, and LTNLCGNGVACVIVAWWEGEL.

This sequence belongs to the dicarboxylate/amino acid:cation symporter (DAACS) (TC 2.A.23) family.

The protein resides in the cell inner membrane. Functionally, responsible for the transport of dicarboxylates such as succinate, fumarate, and malate from the periplasm across the membrane. This chain is C4-dicarboxylate transport protein 3, found in Bradyrhizobium diazoefficiens (strain JCM 10833 / BCRC 13528 / IAM 13628 / NBRC 14792 / USDA 110).